The primary structure comprises 393 residues: MTTAWVDASAGASGDMLLGALVGAGVPVAVLQAAVDAVAPEPVTLRVEHVRRGGLAATRCHVEVTDTARHRTWRDVRTLLAAADLADDVRGLALRVFERLATAEATVHGTSPDDVHFHEVGALDAIADVTGVVAGFVHLGATAVTVSPVAVGSGSVSTAHGLLPVPPPAVAELLRGVPSYAGAATMETCTPTGAALLTTLATAYGPQPAMSVDTIGVGAGGRDPEGHPNVLRLFVGVPADAGGGPLLLECNVDDLDPRVWPAVIAALLEAGASDAWLTPILMKKGRPAHTLSALVDAGRAAGVRAAIFRQTSTIGLREQPLTKHALEREIVAVDVDGQRIAVKLARHDGAVVNAQPEYDDVARAAADLDRPVADVLAEAVARGRAFLTPGDKI.

Belongs to the LarC family.

It catalyses the reaction Ni(II)-pyridinium-3,5-bisthiocarboxylate mononucleotide = pyridinium-3,5-bisthiocarboxylate mononucleotide + Ni(2+). Functionally, involved in the biosynthesis of a nickel-pincer cofactor ((SCS)Ni(II) pincer complex). Binds Ni(2+), and functions in nickel delivery to pyridinium-3,5-bisthiocarboxylic acid mononucleotide (P2TMN), to form the mature cofactor. Is thus probably required for the activation of nickel-pincer cofactor-dependent enzymes. The chain is Pyridinium-3,5-bisthiocarboxylic acid mononucleotide nickel insertion protein from Nocardioides sp. (strain ATCC BAA-499 / JS614).